Consider the following 363-residue polypeptide: tRNA dimethylallyltransferase (363 aa).

65 to 72 contacts ATP; it reads GPTASGKS. 67–72 is a binding site for substrate; sequence TASGKS. Interaction with substrate tRNA stretches follow at residues 90–93 and 214–218; these read DSMQ and QRLIR.

This sequence belongs to the IPP transferase family. Monomer. Requires Mg(2+) as cofactor.

The enzyme catalyses adenosine(37) in tRNA + dimethylallyl diphosphate = N(6)-dimethylallyladenosine(37) in tRNA + diphosphate. Its function is as follows. Catalyzes the transfer of a dimethylallyl group onto the adenine at position 37 in tRNAs that read codons beginning with uridine, leading to the formation of N6-(dimethylallyl)adenosine (i(6)A). The protein is tRNA dimethylallyltransferase of Rickettsia rickettsii (strain Sheila Smith).